Reading from the N-terminus, the 824-residue chain is Ent-copalyl diphosphate synthase AN1, chloroplastic (824 aa).

A chloroplast-targeting transit peptide spans Met1–Arg63. The interval Met1 to Glu87 is disordered. The span at Ala44–Arg63 shows a compositional bias: polar residues. Lys247 provides a ligand contact to substrate. Asp379 and Asp381 together coordinate Mg(2+). A DXDD motif motif is present at residues Asp379–Asp382. Lys465 is a substrate binding site.

The protein belongs to the terpene synthase family. Tpsc subfamily. Requires Mg(2+) as cofactor.

It is found in the plastid. It localises to the chloroplast. The catalysed reaction is (2E,6E,10E)-geranylgeranyl diphosphate = ent-copalyl diphosphate. It participates in plant hormone biosynthesis; gibberellin biosynthesis. In terms of biological role, involved in giberellin biosynthesis. Catalyzes the conversion of geranylgeranyl diphosphate to the gibberellin precursor ent-copalyl diphosphate. This Zea mays (Maize) protein is Ent-copalyl diphosphate synthase AN1, chloroplastic.